The following is a 58-amino-acid chain: Ribulose bisphosphate carboxylase large chain (58 aa).

Residues Met1–Ser2 constitute a propeptide that is removed on maturation. The residue at position 3 (Pro3) is an N-acetylproline. Position 14 is an N6,N6,N6-trimethyllysine (Lys14).

It belongs to the RuBisCO large chain family. Type I subfamily. Heterohexadecamer of 8 large chains and 8 small chains.

It is found in the plastid. The protein localises to the chloroplast. It carries out the reaction 2 (2R)-3-phosphoglycerate + 2 H(+) = D-ribulose 1,5-bisphosphate + CO2 + H2O. It catalyses the reaction D-ribulose 1,5-bisphosphate + O2 = 2-phosphoglycolate + (2R)-3-phosphoglycerate + 2 H(+). RuBisCO catalyzes two reactions: the carboxylation of D-ribulose 1,5-bisphosphate, the primary event in carbon dioxide fixation, as well as the oxidative fragmentation of the pentose substrate in the photorespiration process. Both reactions occur simultaneously and in competition at the same active site. The chain is Ribulose bisphosphate carboxylase large chain (rbcL) from Rosa damascena (Damask rose).